A 349-amino-acid polypeptide reads, in one-letter code: Core protein VP7 (349 aa).

Residues Asn-148 and Asn-287 are each glycosylated (N-linked (GlcNAc...) asparagine; by host).

The protein belongs to the orbivirus VP7 family.

It localises to the virion. Its function is as follows. The VP7 protein is one of the five proteins (with VP1, VP3, VP4, and VP6) which form the inner capsid of the virus. This chain is Core protein VP7 (Segment-7), found in Epizootic hemorrhagic disease virus 1 (EHDV-1).